Here is a 276-residue protein sequence, read N- to C-terminus: Ribosomal RNA small subunit methyltransferase A (276 aa).

S-adenosyl-L-methionine contacts are provided by His-15, Leu-17, Gly-42, Glu-64, Asp-89, and Asn-108.

It belongs to the class I-like SAM-binding methyltransferase superfamily. rRNA adenine N(6)-methyltransferase family. RsmA subfamily.

The protein localises to the cytoplasm. It catalyses the reaction adenosine(1518)/adenosine(1519) in 16S rRNA + 4 S-adenosyl-L-methionine = N(6)-dimethyladenosine(1518)/N(6)-dimethyladenosine(1519) in 16S rRNA + 4 S-adenosyl-L-homocysteine + 4 H(+). Specifically dimethylates two adjacent adenosines (A1518 and A1519) in the loop of a conserved hairpin near the 3'-end of 16S rRNA in the 30S particle. May play a critical role in biogenesis of 30S subunits. The polypeptide is Ribosomal RNA small subunit methyltransferase A (Prochlorococcus marinus (strain MIT 9515)).